Consider the following 177-residue polypeptide: MSKYQIDIEINSASQQLPSEEHIRQWISTALDSQQLDEAEVSVYIVDTDEGRDLNREYRERDYATNVLSFPADIPPEVEIPLLGDLVVCAPVVEHEADEQHKPLDAHWAHMLIHGSLHLLGYDHIDNDEAETMEALETQLLARLGYADPYDEASYPEAIPTNPAPRRQASSSAGHIE.

Zn(2+) contacts are provided by His-114, His-118, and His-124. Residues 154–177 are disordered; that stretch reads SYPEAIPTNPAPRRQASSSAGHIE. The span at 168-177 shows a compositional bias: polar residues; it reads QASSSAGHIE.

The protein belongs to the endoribonuclease YbeY family. Requires Zn(2+) as cofactor.

It is found in the cytoplasm. In terms of biological role, single strand-specific metallo-endoribonuclease involved in late-stage 70S ribosome quality control and in maturation of the 3' terminus of the 16S rRNA. The sequence is that of Endoribonuclease YbeY from Cellvibrio japonicus (strain Ueda107) (Pseudomonas fluorescens subsp. cellulosa).